The following is a 65-amino-acid chain: Potassium channel toxin kappa-KTx 2.6 (65 aa).

Residues 1–27 (MKTSKMICAFLLVLVVGTFNDISGAYG) form the signal peptide. The propeptide occupies 28–39 (EYVEDQHSFKIE). Disulfide bonds link cysteine 45-cysteine 63 and cysteine 49-cysteine 59.

This sequence belongs to the short scorpion toxin superfamily. Potassium channel inhibitor kappa-KTx family. Kappa-KTx 2 subfamily. Expressed by the venom gland.

It is found in the secreted. Potassium channel inhibitor (Kv). The sequence is that of Potassium channel toxin kappa-KTx 2.6 from Opisthacanthus cayaporum (South American scorpion).